The following is a 264-amino-acid chain: Undecaprenyl-diphosphatase (264 aa).

Transmembrane regions (helical) follow at residues 34–54 (LLNL…MGSI), 75–95 (LLYL…LYII), 104–124 (YDPS…GLYI), 137–157 (LSLK…LPGV), 180–200 (YSYL…ILFS), 207–227 (VISL…FIIG), and 243–263 (IYII…LTIL).

The protein belongs to the UppP family.

It is found in the cell membrane. It carries out the reaction di-trans,octa-cis-undecaprenyl diphosphate + H2O = di-trans,octa-cis-undecaprenyl phosphate + phosphate + H(+). Catalyzes the dephosphorylation of undecaprenyl diphosphate (UPP). This chain is Undecaprenyl-diphosphatase, found in Sulfurisphaera tokodaii (strain DSM 16993 / JCM 10545 / NBRC 100140 / 7) (Sulfolobus tokodaii).